A 241-amino-acid polypeptide reads, in one-letter code: MLSESLTKTKLIDPLILTLLQNIRGHRSNLENLKSIKIDPKLSNIISDKEGKELYIENEFHKAKGFRKLHIEVAEFSRRLKILHCVFFPDPHYDIPIFGMDLVKVNEVVSAAIVDLSPSSKNQNLKYDNLLSTIDKSVFESEREIPGWGDIFSQNVFFASLKNESEKSAFCKIVDHYLLVLIKLSKSSILDHDQEIIQERIDFQKNYCRQQMKNEKTSLVLLKYFDKKWVDEYIKKVLFDF.

This sequence belongs to the HY2 family.

The enzyme catalyses (2R,3Z)-phycocyanobilin + 4 oxidized [2Fe-2S]-[ferredoxin] = biliverdin IXalpha + 4 reduced [2Fe-2S]-[ferredoxin] + 4 H(+). Its function is as follows. Catalyzes the four-electron reduction of biliverdin IX-alpha (2-electron reduction at both the A and D rings); the reaction proceeds via an isolatable 2-electron intermediate, 181,182-dihydrobiliverdin. The chain is Phycocyanobilin:ferredoxin oxidoreductase from Prochlorococcus marinus (strain MIT 9515).